We begin with the raw amino-acid sequence, 159 residues long: Protein hunchback (159 aa).

A compositionally biased stretch (basic residues) spans 18–34 (HNHHHHHHHGHHQHQQR). Disordered stretches follow at residues 18–49 (HNHHHHHHHGHHQHQQRHNSNSNASSPHQSPL) and 119–159 (LTPP…KYMA). Positions 140-159 (EPEKEHDLMSNSSEDMKYMA) are enriched in basic and acidic residues.

The protein belongs to the hunchback C2H2-type zinc-finger protein family.

The protein localises to the nucleus. Its function is as follows. Gap class segmentation protein that controls development of head structures. In Drosophila soonae (Fruit fly), this protein is Protein hunchback (hb).